Here is a 4036-residue protein sequence, read N- to C-terminus: Hybrid PKS-NRPS synthetase iliA (4036 aa).

Positions 7–439 (PEPIAVIGSA…GTNAHAIIES (433 aa)) constitute a Ketosynthase family 3 (KS3) domain. Active-site for beta-ketoacyl synthase activity residues include C181, H318, and H359. The interval 561–886 (IFTGQGAQWP…LKRNGSDVEA (326 aa)) is malonyl-CoA:ACP transacylase (MAT) domain. Positions 955-1092 (HELLGRRTPD…GDLVVHLGAD (138 aa)) are N-terminal hotdog fold. The dehydratase (DH) domain stretch occupies residues 955–1262 (HELLGRRTPD…ATNMVGEQDA (308 aa)). The PKS/mFAS DH domain maps to 955-1263 (HELLGRRTPD…TNMVGEQDAS (309 aa)). Residue H987 is the Proton acceptor; for dehydratase activity of the active site. Residues 1109-1263 (LVNIDGERVY…TNMVGEQDAS (155 aa)) form a C-terminal hotdog fold region. D1168 functions as the Proton donor; for dehydratase activity in the catalytic mechanism. Positions 1402–1601 (EDDMLDRFYM…FSGADTVMHD (200 aa)) are methyltransferase (MT) domain. The interval 2136–2277 (KTYFMVGMAG…SVATVIGNIG (142 aa)) is ketoreductase (KR) domain. The region spanning 2425-2502 (EAVAAVVKAF…QVCTWATKKV (78 aa)) is the Carrier 1 domain. Position 2462 is an O-(pantetheine 4'-phosphoryl)serine (S2462). 2 disordered regions span residues 2520–2583 (AEKT…KLGT) and 2597–2621 (DADARSESTGSSGMADSDDSSNRPE). Residues 2530-2540 (APAPDAAPAPA) are compositionally biased toward pro residues. The interval 2627–3054 (IMSQAQSRIW…HLDITECEIY (428 aa)) is condensation (C) domain. The adenylation (A) (KR) domain stretch occupies residues 3088–3485 (SLHSDKSAVK…GTLLCLGRLD (398 aa)). Residues 3088-3485 (SLHSDKSAVK…GTLLCLGRLD (398 aa)) form a reductase (RED) domain region. The Carrier 2 domain maps to 3596–3675 (EKMTIREGEV…EMARRIDEHQ (80 aa)). S3635 is subject to O-(pantetheine 4'-phosphoryl)serine.

The protein in the C-terminal section; belongs to the NRP synthetase family.

It catalyses the reaction L-tyrosine + holo-[ACP] + 7 malonyl-CoA + acetyl-CoA + 8 AH2 + 2 S-adenosyl-L-methionine + ATP + 4 H(+) = N-[(4E,6E,10S,12Z,14E)-6,10-dimethyl-3-oxohexadeca-4,6,12,14-tetraenoyl]-L-tyrosyl-[ACP] + 8 A + AMP + 2 S-adenosyl-L-homocysteine + 7 CO2 + diphosphate + 8 CoA + 6 H2O. It functions in the pathway mycotoxin biosynthesis. In terms of biological role, hybrid PKS-NRPS synthetase; part of the gene cluster that mediates the biosynthesis of ilicicolin H, a 4-hydroxy-2-pyridonealkaloid that has potent and broad antifungal activities by inhibiting the mitochondrial respiration chain. IliA assembles the backbone of ilicicolin H. The PKS portion and trans-acting enoyl reductase iliB work together to construct an octaketide, and two methyl groups are introduced by the MT domain during the chain assembly. The nascent chain is then condensed with tyrosine, catalyzed by the C domain, and the resulting PKS-NRPS hybrid is offloaded by the RED domain to form an advanced tetramic acid intermediate. The biosynthesis of ilicicolin H starts with formation of the tetramic acid by the hybrid PKS-NRPS synthetase iliA with the partnering trans-enoyl reductase iliB since iliA lacks a designated enoylreductase (ER) domain. The cytochrome P450 monooxygenase iliC then catalyzes the ring expansion of the tetramate to the acyclic 2-pyridone. The pericyclase iliD further converts the acyclic 2-pyridone into 8-epi-ilicicolin H. 8-epi-ilicicolin H might then spontaneously convert to ilicicolin H, since ilicicolin H is produced in the absence of the epimerase iliE, in contrast to what was observed for the Talaromyces variabilis ilicolin H biosynthetic pathway. This Neonectria sp. (strain DH2) protein is Hybrid PKS-NRPS synthetase iliA.